Here is a 103-residue protein sequence, read N- to C-terminus: Large ribosomal subunit protein bL21 (103 aa).

The protein belongs to the bacterial ribosomal protein bL21 family. In terms of assembly, part of the 50S ribosomal subunit. Contacts protein L20.

Its function is as follows. This protein binds to 23S rRNA in the presence of protein L20. The sequence is that of Large ribosomal subunit protein bL21 from Histophilus somni (strain 129Pt) (Haemophilus somnus).